Here is a 128-residue protein sequence, read N- to C-terminus: Small ribosomal subunit protein uS11 (128 aa).

Belongs to the universal ribosomal protein uS11 family. In terms of assembly, part of the 30S ribosomal subunit. Interacts with proteins S7 and S18. Binds to IF-3.

In terms of biological role, located on the platform of the 30S subunit, it bridges several disparate RNA helices of the 16S rRNA. Forms part of the Shine-Dalgarno cleft in the 70S ribosome. This Vesicomyosocius okutanii subsp. Calyptogena okutanii (strain HA) protein is Small ribosomal subunit protein uS11.